A 195-amino-acid chain; its full sequence is GTP cyclohydrolase 1 (195 aa).

3 residues coordinate Zn(2+): C86, H89, and C158.

This sequence belongs to the GTP cyclohydrolase I family. Homomer.

It catalyses the reaction GTP + H2O = 7,8-dihydroneopterin 3'-triphosphate + formate + H(+). It functions in the pathway cofactor biosynthesis; 7,8-dihydroneopterin triphosphate biosynthesis; 7,8-dihydroneopterin triphosphate from GTP: step 1/1. In Ruminiclostridium cellulolyticum (strain ATCC 35319 / DSM 5812 / JCM 6584 / H10) (Clostridium cellulolyticum), this protein is GTP cyclohydrolase 1.